The primary structure comprises 318 residues: Ferrochelatase (318 aa).

Fe cation is bound by residues H186 and E264.

Belongs to the ferrochelatase family.

It is found in the cytoplasm. The catalysed reaction is heme b + 2 H(+) = protoporphyrin IX + Fe(2+). The protein operates within porphyrin-containing compound metabolism; protoheme biosynthesis; protoheme from protoporphyrin-IX: step 1/1. Its function is as follows. Catalyzes the ferrous insertion into protoporphyrin IX. This is Ferrochelatase from Chlamydia caviae (strain ATCC VR-813 / DSM 19441 / 03DC25 / GPIC) (Chlamydophila caviae).